A 127-amino-acid polypeptide reads, in one-letter code: MAAAGARGLRATYHRLMDKVELLLPKKLRPLYNHPAGPRTVFFWAPIMKWGLVCAGLADMARPAEKLSTAQSTVLMATGFIWSRYSLVIIPKNWSLFAVNFFVGSAGASQLFRIWRYNQELKSKGIQ.

The Mitochondrial matrix segment spans residues 2–40 (AAAGARGLRATYHRLMDKVELLLPKKLRPLYNHPAGPRT). At lysine 26 the chain carries N6-acetyllysine. Residues 41 to 61 (VFFWAPIMKWGLVCAGLADMA) traverse the membrane as a helical segment. Over 62-72 (RPAEKLSTAQS) the chain is Mitochondrial intermembrane. A helical transmembrane segment spans residues 73–90 (TVLMATGFIWSRYSLVII). Over 91–92 (PK) the chain is Mitochondrial matrix. Residues 93 to 115 (NWSLFAVNFFVGSAGASQLFRIW) traverse the membrane as a helical segment. Residues 116-127 (RYNQELKSKGIQ) are Mitochondrial intermembrane-facing.

Belongs to the mitochondrial pyruvate carrier (MPC) (TC 2.A.105) family. Homodimer. Homooligomer. Forms heterodimers with MPC1 and MPC1L. The heterodimer is the more stable and dominant form.

The protein localises to the mitochondrion inner membrane. The catalysed reaction is pyruvate(out) + H(+)(out) = pyruvate(in) + H(+)(in). In terms of biological role, mediates the uptake of pyruvate into mitochondria. This Mus musculus (Mouse) protein is Mitochondrial pyruvate carrier 2 (Mpc2).